A 322-amino-acid polypeptide reads, in one-letter code: Phosphatidylserine decarboxylase proenzyme (322 aa).

Active-site charge relay system; for autoendoproteolytic cleavage activity residues include D90, H147, and S254. S254 (schiff-base intermediate with substrate; via pyruvic acid; for decarboxylase activity) is an active-site residue. The residue at position 254 (S254) is a Pyruvic acid (Ser); by autocatalysis.

The protein belongs to the phosphatidylserine decarboxylase family. PSD-B subfamily. Prokaryotic type I sub-subfamily. In terms of assembly, heterodimer of a large membrane-associated beta subunit and a small pyruvoyl-containing alpha subunit. Pyruvate serves as cofactor. Is synthesized initially as an inactive proenzyme. Formation of the active enzyme involves a self-maturation process in which the active site pyruvoyl group is generated from an internal serine residue via an autocatalytic post-translational modification. Two non-identical subunits are generated from the proenzyme in this reaction, and the pyruvate is formed at the N-terminus of the alpha chain, which is derived from the carboxyl end of the proenzyme. The autoendoproteolytic cleavage occurs by a canonical serine protease mechanism, in which the side chain hydroxyl group of the serine supplies its oxygen atom to form the C-terminus of the beta chain, while the remainder of the serine residue undergoes an oxidative deamination to produce ammonia and the pyruvoyl prosthetic group on the alpha chain. During this reaction, the Ser that is part of the protease active site of the proenzyme becomes the pyruvoyl prosthetic group, which constitutes an essential element of the active site of the mature decarboxylase.

The protein localises to the cell membrane. The catalysed reaction is a 1,2-diacyl-sn-glycero-3-phospho-L-serine + H(+) = a 1,2-diacyl-sn-glycero-3-phosphoethanolamine + CO2. It functions in the pathway phospholipid metabolism; phosphatidylethanolamine biosynthesis; phosphatidylethanolamine from CDP-diacylglycerol: step 2/2. Catalyzes the formation of phosphatidylethanolamine (PtdEtn) from phosphatidylserine (PtdSer). This chain is Phosphatidylserine decarboxylase proenzyme, found in Shigella dysenteriae serotype 1 (strain Sd197).